We begin with the raw amino-acid sequence, 265 residues long: 5'-nucleotidase SurE (265 aa).

Residues Asp-8, Asp-9, Ser-39, and Asn-96 each coordinate a divalent metal cation.

This sequence belongs to the SurE nucleotidase family. A divalent metal cation serves as cofactor.

It is found in the cytoplasm. It catalyses the reaction a ribonucleoside 5'-phosphate + H2O = a ribonucleoside + phosphate. Its function is as follows. Nucleotidase that shows phosphatase activity on nucleoside 5'-monophosphates. The polypeptide is 5'-nucleotidase SurE (Dehalococcoides mccartyi (strain ATCC BAA-2266 / KCTC 15142 / 195) (Dehalococcoides ethenogenes (strain 195))).